The following is a 62-amino-acid chain: Photosystem II reaction center protein Z (62 aa).

A run of 2 helical transmembrane segments spans residues 8-28 (AVFALIATSSILLISVPVVFA) and 41-61 (FSGTSLWIGLVFLVAILNSLI).

The protein belongs to the PsbZ family. In terms of assembly, PSII is composed of 1 copy each of membrane proteins PsbA, PsbB, PsbC, PsbD, PsbE, PsbF, PsbH, PsbI, PsbJ, PsbK, PsbL, PsbM, PsbT, PsbY, PsbZ, Psb30/Ycf12, at least 3 peripheral proteins of the oxygen-evolving complex and a large number of cofactors. It forms dimeric complexes.

Its subcellular location is the plastid. The protein resides in the chloroplast thylakoid membrane. Its function is as follows. May control the interaction of photosystem II (PSII) cores with the light-harvesting antenna, regulates electron flow through the 2 photosystem reaction centers. PSII is a light-driven water plastoquinone oxidoreductase, using light energy to abstract electrons from H(2)O, generating a proton gradient subsequently used for ATP formation. This is Photosystem II reaction center protein Z from Liriodendron tulipifera (Tuliptree).